The following is a 192-amino-acid chain: Adenylate kinase (192 aa).

ATP is bound at residue 10 to 18 (GVPGVGSTT).

This sequence belongs to the archaeal adenylate kinase family. In terms of assembly, monomer.

It is found in the cytoplasm. The catalysed reaction is AMP + ATP = 2 ADP. The polypeptide is Adenylate kinase (adkA) (Methanocaldococcus jannaschii (strain ATCC 43067 / DSM 2661 / JAL-1 / JCM 10045 / NBRC 100440) (Methanococcus jannaschii)).